The primary structure comprises 330 residues: MQTNLLKPKAINVEQLGPNRAKVALEPFERGYGHTLGNAIRRVLLSSMVGYAATEVTIAGVLHEYSSIDGVQEDVVNILLNLKGVVFKLHNRDEVTLSLRKDGEGVVTARDIQTPHDVEIVNPEHVIATLSAGGKLDMQIKVEKGRGYVPGNLRRYADEATKSIGRIVLDASFSPVKRVSYTVESARVEQRTDLDKLVVEIETNGAITAEDAVRASAKILVEQLAVFAQLEGGELAAFDAPASSRGAATFDPILLRPVDELELTVRSANCLKAENIYYIGDLIQRTENELLKTPNLGRKSLNEIKEVLASRGLTLGMKLENWPPAGLDKR.

Residues 1–231 (MQTNLLKPKA…EQLAVFAQLE (231 aa)) are alpha N-terminal domain (alpha-NTD). Residues 250-330 (FDPILLRPVD…NWPPAGLDKR (81 aa)) form an alpha C-terminal domain (alpha-CTD) region.

Belongs to the RNA polymerase alpha chain family. Homodimer. The RNAP catalytic core consists of 2 alpha, 1 beta, 1 beta' and 1 omega subunit. When a sigma factor is associated with the core the holoenzyme is formed, which can initiate transcription.

It catalyses the reaction RNA(n) + a ribonucleoside 5'-triphosphate = RNA(n+1) + diphosphate. Its function is as follows. DNA-dependent RNA polymerase catalyzes the transcription of DNA into RNA using the four ribonucleoside triphosphates as substrates. The sequence is that of DNA-directed RNA polymerase subunit alpha from Acidovorax ebreus (strain TPSY) (Diaphorobacter sp. (strain TPSY)).